The chain runs to 231 residues: uncharacterized protein (231 aa).

10–34 is a binding site for NADP(+); the sequence is VVTGAGSGIGEAIATLLHEEGAKVV. S140 lines the substrate pocket. The active-site Proton acceptor is the Y153.

It belongs to the short-chain dehydrogenases/reductases (SDR) family.

This is an uncharacterized protein from Staphylococcus aureus (strain MRSA252).